Here is a 571-residue protein sequence, read N- to C-terminus: Urease subunit alpha (571 aa).

Residues 133-571 (GGIDTHVHFI…LPLTQRYFLF (439 aa)) form the Urease domain. Residues His-138, His-140, and Lys-221 each contribute to the Ni(2+) site. Lys-221 bears the N6-carboxylysine mark. His-223 provides a ligand contact to substrate. Ni(2+) contacts are provided by His-250 and His-276. His-324 (proton donor) is an active-site residue. Asp-364 contributes to the Ni(2+) binding site.

The protein belongs to the metallo-dependent hydrolases superfamily. Urease alpha subunit family. Heterotrimer of UreA (gamma), UreB (beta) and UreC (alpha) subunits. Three heterotrimers associate to form the active enzyme. The cofactor is Ni cation. Carboxylation allows a single lysine to coordinate two nickel ions.

The protein resides in the cytoplasm. The enzyme catalyses urea + 2 H2O + H(+) = hydrogencarbonate + 2 NH4(+). The protein operates within nitrogen metabolism; urea degradation; CO(2) and NH(3) from urea (urease route): step 1/1. In Staphylococcus saprophyticus subsp. saprophyticus (strain ATCC 15305 / DSM 20229 / NCIMB 8711 / NCTC 7292 / S-41), this protein is Urease subunit alpha.